A 429-amino-acid chain; its full sequence is Trigger factor (429 aa).

Positions 161–246 constitute a PPIase FKBP-type domain; the sequence is EDRVTIDFTG…LKKVEERELP (86 aa).

This sequence belongs to the FKBP-type PPIase family. Tig subfamily. In terms of assembly, homodimer and monomer. In vivo most of the ribosomes are in complex with monomeric TF. Uncomplexed TF, however, is in a monomer-dimer equilibrium with approximately two thirds of TF existing in a dimeric state.

The protein resides in the cytoplasm. It carries out the reaction [protein]-peptidylproline (omega=180) = [protein]-peptidylproline (omega=0). In terms of biological role, involved in protein export. Acts as a chaperone by maintaining the newly synthesized protein in an open conformation. Functions as a peptidyl-prolyl cis-trans isomerase. The sequence is that of Trigger factor from Escherichia coli O45:K1 (strain S88 / ExPEC).